A 158-amino-acid polypeptide reads, in one-letter code: SsrA-binding protein (158 aa).

Belongs to the SmpB family.

Its subcellular location is the cytoplasm. Functionally, required for rescue of stalled ribosomes mediated by trans-translation. Binds to transfer-messenger RNA (tmRNA), required for stable association of tmRNA with ribosomes. tmRNA and SmpB together mimic tRNA shape, replacing the anticodon stem-loop with SmpB. tmRNA is encoded by the ssrA gene; the 2 termini fold to resemble tRNA(Ala) and it encodes a 'tag peptide', a short internal open reading frame. During trans-translation Ala-aminoacylated tmRNA acts like a tRNA, entering the A-site of stalled ribosomes, displacing the stalled mRNA. The ribosome then switches to translate the ORF on the tmRNA; the nascent peptide is terminated with the 'tag peptide' encoded by the tmRNA and targeted for degradation. The ribosome is freed to recommence translation, which seems to be the essential function of trans-translation. In Glaesserella parasuis serovar 5 (strain SH0165) (Haemophilus parasuis), this protein is SsrA-binding protein.